The following is a 95-amino-acid chain: MSLEKTEVDTISRLAAISVDASEVDQLTAKISNVLDLFQRMEAVDTTNVEPMSHPLDQVQRLREDVVTETDHHEEYQKLAPAAEKGMYLVPQVID.

This sequence belongs to the GatC family. As to quaternary structure, heterotrimer of A, B and C subunits.

The enzyme catalyses L-glutamyl-tRNA(Gln) + L-glutamine + ATP + H2O = L-glutaminyl-tRNA(Gln) + L-glutamate + ADP + phosphate + H(+). It catalyses the reaction L-aspartyl-tRNA(Asn) + L-glutamine + ATP + H2O = L-asparaginyl-tRNA(Asn) + L-glutamate + ADP + phosphate + 2 H(+). Allows the formation of correctly charged Asn-tRNA(Asn) or Gln-tRNA(Gln) through the transamidation of misacylated Asp-tRNA(Asn) or Glu-tRNA(Gln) in organisms which lack either or both of asparaginyl-tRNA or glutaminyl-tRNA synthetases. The reaction takes place in the presence of glutamine and ATP through an activated phospho-Asp-tRNA(Asn) or phospho-Glu-tRNA(Gln). The chain is Aspartyl/glutamyl-tRNA(Asn/Gln) amidotransferase subunit C from Hydrogenovibrio crunogenus (strain DSM 25203 / XCL-2) (Thiomicrospira crunogena).